The chain runs to 367 residues: Peptide chain release factor 2 (367 aa).

Gln254 is modified (N5-methylglutamine).

This sequence belongs to the prokaryotic/mitochondrial release factor family. In terms of processing, methylated by PrmC. Methylation increases the termination efficiency of RF2.

Its subcellular location is the cytoplasm. Peptide chain release factor 2 directs the termination of translation in response to the peptide chain termination codons UGA and UAA. The chain is Peptide chain release factor 2 from Burkholderia mallei (strain ATCC 23344).